The primary structure comprises 131 residues: Translation initiation factor 5A (131 aa).

The residue at position 36 (Lys-36) is a Hypusine.

Belongs to the eIF-5A family.

It is found in the cytoplasm. In terms of biological role, functions by promoting the formation of the first peptide bond. In Saccharolobus solfataricus (strain ATCC 35092 / DSM 1617 / JCM 11322 / P2) (Sulfolobus solfataricus), this protein is Translation initiation factor 5A.